Here is a 265-residue protein sequence, read N- to C-terminus: 3-methyl-2-oxobutanoate hydroxymethyltransferase (265 aa).

Mg(2+) contacts are provided by D45 and D84. Residues 45–46 (DS), D84, and K112 contribute to the 3-methyl-2-oxobutanoate site. E114 serves as a coordination point for Mg(2+). E181 (proton acceptor) is an active-site residue.

It belongs to the PanB family. As to quaternary structure, homodecamer; pentamer of dimers. Requires Mg(2+) as cofactor.

Its subcellular location is the cytoplasm. The catalysed reaction is 3-methyl-2-oxobutanoate + (6R)-5,10-methylene-5,6,7,8-tetrahydrofolate + H2O = 2-dehydropantoate + (6S)-5,6,7,8-tetrahydrofolate. It functions in the pathway cofactor biosynthesis; (R)-pantothenate biosynthesis; (R)-pantoate from 3-methyl-2-oxobutanoate: step 1/2. Functionally, catalyzes the reversible reaction in which hydroxymethyl group from 5,10-methylenetetrahydrofolate is transferred onto alpha-ketoisovalerate to form ketopantoate. In Pseudoalteromonas atlantica (strain T6c / ATCC BAA-1087), this protein is 3-methyl-2-oxobutanoate hydroxymethyltransferase.